A 178-amino-acid polypeptide reads, in one-letter code: Interleukin-10 (178 aa).

The signal sequence occupies residues 1-18; that stretch reads MHSSALLCCLVFLTGVRA. Intrachain disulfides connect C30-C126 and C80-C132. A glycan (N-linked (GlcNAc...) asparagine) is linked at N134.

The protein belongs to the IL-10 family. In terms of assembly, homodimer. Interacts with IL10RA and IL10RB.

It is found in the secreted. Major immune regulatory cytokine that acts on many cells of the immune system where it has profound anti-inflammatory functions, limiting excessive tissue disruption caused by inflammation. Mechanistically, IL10 binds to its heterotetrameric receptor comprising IL10RA and IL10RB leading to JAK1 and STAT2-mediated phosphorylation of STAT3. In turn, STAT3 translocates to the nucleus where it drives expression of anti-inflammatory mediators. Targets antigen-presenting cells (APCs) such as macrophages and monocytes and inhibits their release of pro-inflammatory cytokines including granulocyte-macrophage colony-stimulating factor /GM-CSF, granulocyte colony-stimulating factor/G-CSF, IL-1 alpha, IL-1 beta, IL-6, IL-8 and TNF-alpha. Also interferes with antigen presentation by reducing the expression of MHC-class II and co-stimulatory molecules, thereby inhibiting their ability to induce T cell activation. In addition, controls the inflammatory response of macrophages by reprogramming essential metabolic pathways including mTOR signaling. The chain is Interleukin-10 (IL10) from Saimiri sciureus (Common squirrel monkey).